A 473-amino-acid chain; its full sequence is 3-isopropylmalate dehydratase large subunit (473 aa).

Residues Cys-351, Cys-414, and Cys-417 each contribute to the [4Fe-4S] cluster site.

Belongs to the aconitase/IPM isomerase family. LeuC type 1 subfamily. As to quaternary structure, heterodimer of LeuC and LeuD. Requires [4Fe-4S] cluster as cofactor.

It catalyses the reaction (2R,3S)-3-isopropylmalate = (2S)-2-isopropylmalate. It participates in amino-acid biosynthesis; L-leucine biosynthesis; L-leucine from 3-methyl-2-oxobutanoate: step 2/4. In terms of biological role, catalyzes the isomerization between 2-isopropylmalate and 3-isopropylmalate, via the formation of 2-isopropylmaleate. The protein is 3-isopropylmalate dehydratase large subunit of Polaromonas sp. (strain JS666 / ATCC BAA-500).